The chain runs to 37 residues: Large ribosomal subunit protein bL36 (37 aa).

Belongs to the bacterial ribosomal protein bL36 family.

The sequence is that of Large ribosomal subunit protein bL36 from Mycobacteroides abscessus (strain ATCC 19977 / DSM 44196 / CCUG 20993 / CIP 104536 / JCM 13569 / NCTC 13031 / TMC 1543 / L948) (Mycobacterium abscessus).